Here is a 158-residue protein sequence, read N- to C-terminus: Large ribosomal subunit protein uL11 (158 aa).

The tract at residues 1–28 (MAGTIEALVPGGQATPGPPLGPELGPTP) is disordered.

The protein belongs to the universal ribosomal protein uL11 family. In terms of assembly, part of the ribosomal stalk of the 50S ribosomal subunit. Interacts with L10 and the large rRNA to form the base of the stalk. L10 forms an elongated spine to which L12 dimers bind in a sequential fashion forming a multimeric L10(L12)X complex.

Its function is as follows. Forms part of the ribosomal stalk which helps the ribosome interact with GTP-bound translation factors. This Halorubrum lacusprofundi (strain ATCC 49239 / DSM 5036 / JCM 8891 / ACAM 34) protein is Large ribosomal subunit protein uL11.